Reading from the N-terminus, the 328-residue chain is tRNA uridine(34) hydroxylase (328 aa).

Positions 123-217 (SDPETVLIDT…YLEEVPKEKS (95 aa)) constitute a Rhodanese domain. C177 acts as the Cysteine persulfide intermediate in catalysis. The tract at residues 304 to 328 (AKKLAQLNKQKKQQAKEAARKKAQQ) is disordered. Basic and acidic residues predominate over residues 317–328 (QAKEAARKKAQQ).

The protein belongs to the TrhO family.

The enzyme catalyses uridine(34) in tRNA + AH2 + O2 = 5-hydroxyuridine(34) in tRNA + A + H2O. Functionally, catalyzes oxygen-dependent 5-hydroxyuridine (ho5U) modification at position 34 in tRNAs. In Francisella tularensis subsp. holarctica (strain LVS), this protein is tRNA uridine(34) hydroxylase.